A 339-amino-acid chain; its full sequence is MAPQSNRKDLHLDAVLHHDMNMKSKTAGFESVEFEHCALPECDFNAVDLSSEFLGHSLALPFLISSMTGGAKDAEIINCRLAEAASEMGIAMGVGSQRVSLEDSLHSGLGKTIRDLAKGVPLYSNLGAAQLMDKQRFDNAQRAVDFIQADALFVHLNPMQEAFQQNGDHDWIGVLKSIEQLKQRVDVPMIIKEVGFGISGVVAKQLVEAGVDAIDVAGAGGTSWSAVEGYCQTDNKMQRAAELFRDWGIPTAKCLEQIRGQYPDLPLIASGGVYNGLEAAKAVHLGANLVGQAGAVLKAATISTESIVEHFEQMALELRLACFGTGSANLRALTQARRL.

Position 7 to 8 (7 to 8 (RK)) interacts with substrate. Residues serine 65, 66-68 (SMT), serine 96, and asparagine 125 each bind FMN. 96–98 (SQR) serves as a coordination point for substrate. Glutamine 160 serves as a coordination point for substrate. Mg(2+) is bound at residue glutamate 161. FMN-binding positions include lysine 192, threonine 222, and 293-294 (AG).

The protein belongs to the IPP isomerase type 2 family. Homooctamer. Dimer of tetramers. The cofactor is FMN. NADPH serves as cofactor. Mg(2+) is required as a cofactor.

The protein localises to the cytoplasm. The catalysed reaction is isopentenyl diphosphate = dimethylallyl diphosphate. Its function is as follows. Involved in the biosynthesis of isoprenoids. Catalyzes the 1,3-allylic rearrangement of the homoallylic substrate isopentenyl (IPP) to its allylic isomer, dimethylallyl diphosphate (DMAPP). In Vibrio campbellii (strain ATCC BAA-1116), this protein is Isopentenyl-diphosphate delta-isomerase.